The chain runs to 89 residues: Defensin-like protein 197 (89 aa).

Residues Met1–Ala26 form the signal peptide. Cystine bridges form between Cys33/Cys86, Cys46/Cys70, Cys55/Cys81, and Cys59/Cys83.

It belongs to the DEFL family. Protease inhibitor I18 (RTI/MTI-2) subfamily.

The protein localises to the secreted. The polypeptide is Defensin-like protein 197 (ATTI6) (Arabidopsis thaliana (Mouse-ear cress)).